Here is a 166-residue protein sequence, read N- to C-terminus: Large ribosomal subunit protein uL10 (166 aa).

This sequence belongs to the universal ribosomal protein uL10 family. As to quaternary structure, part of the ribosomal stalk of the 50S ribosomal subunit. The N-terminus interacts with L11 and the large rRNA to form the base of the stalk. The C-terminus forms an elongated spine to which L12 dimers bind in a sequential fashion forming a multimeric L10(L12)X complex.

Forms part of the ribosomal stalk, playing a central role in the interaction of the ribosome with GTP-bound translation factors. This is Large ribosomal subunit protein uL10 from Shewanella sediminis (strain HAW-EB3).